The primary structure comprises 190 residues: Potassium-transporting ATPase KdpC subunit (190 aa).

Residues 10 to 30 (TFLFLLLITGGVYPLLTTALG) form a helical membrane-spanning segment.

Belongs to the KdpC family. In terms of assembly, the system is composed of three essential subunits: KdpA, KdpB and KdpC.

It localises to the cell inner membrane. Functionally, part of the high-affinity ATP-driven potassium transport (or Kdp) system, which catalyzes the hydrolysis of ATP coupled with the electrogenic transport of potassium into the cytoplasm. This subunit acts as a catalytic chaperone that increases the ATP-binding affinity of the ATP-hydrolyzing subunit KdpB by the formation of a transient KdpB/KdpC/ATP ternary complex. The sequence is that of Potassium-transporting ATPase KdpC subunit from Escherichia coli O7:K1 (strain IAI39 / ExPEC).